Consider the following 514-residue polypeptide: Peptide chain release factor 3 (514 aa).

One can recognise a tr-type G domain in the interval 8–268 (KKRRTFAIIS…TFLKFAPEPH (261 aa)). Residues 17 to 24 (SHPDAGKT), 85 to 89 (DTPGH), and 139 to 142 (NKLD) each bind GTP.

Belongs to the TRAFAC class translation factor GTPase superfamily. Classic translation factor GTPase family. PrfC subfamily.

It is found in the cytoplasm. Its function is as follows. Increases the formation of ribosomal termination complexes and stimulates activities of RF-1 and RF-2. It binds guanine nucleotides and has strong preference for UGA stop codons. It may interact directly with the ribosome. The stimulation of RF-1 and RF-2 is significantly reduced by GTP and GDP, but not by GMP. The polypeptide is Peptide chain release factor 3 (Streptococcus pneumoniae (strain Hungary19A-6)).